We begin with the raw amino-acid sequence, 172 residues long: Phosphopantetheine adenylyltransferase (172 aa).

Substrate is bound at residue T13. Residues 13-14 (TF) and H21 contribute to the ATP site. Positions 45, 81, and 95 each coordinate substrate. ATP contacts are provided by residues 96-98 (GLR), E106, and 131-137 (SQFISSR).

It belongs to the bacterial CoaD family. In terms of assembly, homohexamer. Mg(2+) is required as a cofactor.

The protein localises to the cytoplasm. The enzyme catalyses (R)-4'-phosphopantetheine + ATP + H(+) = 3'-dephospho-CoA + diphosphate. It functions in the pathway cofactor biosynthesis; coenzyme A biosynthesis; CoA from (R)-pantothenate: step 4/5. Reversibly transfers an adenylyl group from ATP to 4'-phosphopantetheine, yielding dephospho-CoA (dPCoA) and pyrophosphate. The chain is Phosphopantetheine adenylyltransferase from Rhodospirillum rubrum (strain ATCC 11170 / ATH 1.1.1 / DSM 467 / LMG 4362 / NCIMB 8255 / S1).